The chain runs to 367 residues: Peptide chain release factor 1 (367 aa).

Position 243 is an N5-methylglutamine (Q243).

This sequence belongs to the prokaryotic/mitochondrial release factor family. Post-translationally, methylated by PrmC. Methylation increases the termination efficiency of RF1.

The protein localises to the cytoplasm. Its function is as follows. Peptide chain release factor 1 directs the termination of translation in response to the peptide chain termination codons UAG and UAA. This is Peptide chain release factor 1 from Acidovorax sp. (strain JS42).